The chain runs to 151 residues: Transcriptional repressor NrdR (151 aa).

Residues 3–34 fold into a zinc finger; that stretch reads CPFCSSDNTRVIDSRPADDNSSIRRRRLCDDC. The region spanning 49–139 is the ATP-cone domain; sequence LIVIKKDNNR…VYREFKDVNT (91 aa).

The protein belongs to the NrdR family. Requires Zn(2+) as cofactor.

Functionally, negatively regulates transcription of bacterial ribonucleotide reductase nrd genes and operons by binding to NrdR-boxes. The protein is Transcriptional repressor NrdR of Agathobacter rectalis (strain ATCC 33656 / DSM 3377 / JCM 17463 / KCTC 5835 / VPI 0990) (Eubacterium rectale).